The following is a 430-amino-acid chain: Enolase (430 aa).

Glutamine 167 provides a ligand contact to (2R)-2-phosphoglycerate. Glutamate 209 functions as the Proton donor in the catalytic mechanism. Residues aspartate 246, glutamate 287, and aspartate 314 each contribute to the Mg(2+) site. (2R)-2-phosphoglycerate-binding residues include lysine 339, arginine 368, serine 369, and lysine 390. Lysine 339 acts as the Proton acceptor in catalysis.

It belongs to the enolase family. The cofactor is Mg(2+).

The protein localises to the cytoplasm. It is found in the secreted. It localises to the cell surface. It catalyses the reaction (2R)-2-phosphoglycerate = phosphoenolpyruvate + H2O. It functions in the pathway carbohydrate degradation; glycolysis; pyruvate from D-glyceraldehyde 3-phosphate: step 4/5. Its function is as follows. Catalyzes the reversible conversion of 2-phosphoglycerate (2-PG) into phosphoenolpyruvate (PEP). It is essential for the degradation of carbohydrates via glycolysis. This chain is Enolase, found in Prochlorococcus marinus (strain MIT 9515).